Reading from the N-terminus, the 500-residue chain is Glucosylglycerol-phosphate synthase (500 aa).

The protein belongs to the glycosyltransferase 20 family.

It catalyses the reaction ADP-alpha-D-glucose + sn-glycerol 3-phosphate = 2-O-(alpha-D-glucopyranosyl)-sn-glycerol 3-phosphate + ADP + H(+). It functions in the pathway glycan metabolism; glucosylglycerol biosynthesis. Involved in salt tolerance by producing GG-phosphate from ADP-glucose and glycerol-3-phosphate (G3P), an intermediate in the synthesis of the osmolyte glucosylglycerol (GG). This Picosynechococcus sp. (strain ATCC 27264 / PCC 7002 / PR-6) (Agmenellum quadruplicatum) protein is Glucosylglycerol-phosphate synthase (ggpS).